Reading from the N-terminus, the 100-residue chain is Urease subunit gamma (100 aa).

It belongs to the urease gamma subunit family. In terms of assembly, heterotrimer of UreA (gamma), UreB (beta) and UreC (alpha) subunits. Three heterotrimers associate to form the active enzyme.

The protein localises to the cytoplasm. The catalysed reaction is urea + 2 H2O + H(+) = hydrogencarbonate + 2 NH4(+). It participates in nitrogen metabolism; urea degradation; CO(2) and NH(3) from urea (urease route): step 1/1. This Mycobacterium bovis (strain ATCC BAA-935 / AF2122/97) protein is Urease subunit gamma.